An 858-amino-acid polypeptide reads, in one-letter code: MARRWSTKESQRRGSAWLLLFLAGVYGNGALAELSENVHISGVSTACGESPEQIRAPSGIITSPGWPSDYPAQVNCSWLIRANPGEIITISFQDFDIQGSRRCTLDWLTIETYKNIESYRACGSTIPPPYISSQDHVWIRFHSDDSVSRKGFRLAYFSGKSEQPDCACDQFRCGNGKCIPEAWKCNSMDECGDSSDEEVCASDAHPPTTTAFQPCAYNQFQCLSRFTKVYTCLPESLKCDGNIDCLDLGDEIDCDMPTCGQWLKYFYGTFNSPNYPDFYPPGSNCTWLIDTGDHRKVILRFTDFKLDGTGYGDYVKIYDGLEENPRKLLRVLTAFDSHAPLTVVSSSGQIRVHFCADKVNAARGFNATYQVDGFCLPWEIPCGGNWGCYTEQQRCDGYWHCPNGRDEINCTMCQKEEFPCSRNGVCYPRSDRCNYQNHCPNGSDEKNCFFCQPGNFHCKNNRCVFESWVCDSQDDCGDGSDEENCPVIVPTRVITAAVIGSLICGLLLVIALGCTCKLYSLRMFERRSFETQLSRVEAELLRREAPPSYGQLIAQGLIPPVEDFPVCSPNQASVLENLRLAVRSQLGFTSIRLPMTGRSSNIWNRIFNFARSRHSGSLALVSGDGDEVVPSQSSSRETERSRPHRSLFSVESDDTDTENERRDTAGASGGVAAPLPQKVPPTTAVEATVGSGGNSSAQSTRGGHADGREVSSVEAPSVSPARHQLTSALSRMTQGLRWVRFTLGRSSSTTQNRSPLRQLDTAVSGREDDDDVEMLIPVSDGASDIDANDCSRPLLDLASDQVQGFRQPHSAGNPGVRTSNRDGPCERCGIVHTAQIPDTCLEATVKTETSDDEALLLC.

An N-terminal signal peptide occupies residues 1-32; it reads MARRWSTKESQRRGSAWLLLFLAGVYGNGALA. At 33–492 the chain is on the extracellular side; it reads ELSENVHISG…ENCPVIVPTR (460 aa). Cystine bridges form between C47-C76, C103-C122, C166-C178, C173-C191, C185-C200, C215-C232, C222-C245, C239-C254, and C259-C285. A CUB 1 domain is found at 47–159; sequence CGESPEQIRA…KGFRLAYFSG (113 aa). N-linked (GlcNAc...) asparagine glycosylation is present at N75. LDL-receptor class A domains lie at 165 to 201 and 214 to 255; these read DCACDQFRCGNGKCIPEAWKCNSMDECGDSSDEEVCA and PCAY…IDCD. The 114-residue stretch at 259-372 folds into the CUB 2 domain; it reads CGQWLKYFYG…RGFNATYQVD (114 aa). 2 N-linked (GlcNAc...) asparagine glycosylation sites follow: N284 and N366. LDL-receptor class A domains follow at residues 374–411, 412–449, and 450–486; these read FCLPWEIPCGGNWGCYTEQQRCDGYWHCPNGRDEINCT, MCQKEEFPCSRNGVCYPRSDRCNYQNHCPNGSDEKNCF, and FCQPGNFHCKNNRCVFESWVCDSQDDCGDGSDEENCP. Cystine bridges form between C375/C388, C382/C401, C395/C410, C413/C426, C420/C439, C433/C448, C451/C463, C458/C476, and C470/C485. Residue N409 is glycosylated (N-linked (GlcNAc...) asparagine). N441 is a glycosylation site (N-linked (GlcNAc...) asparagine). A helical membrane pass occupies residues 493 to 513; the sequence is VITAAVIGSLICGLLLVIALG. Over 514–858 the chain is Cytoplasmic; sequence CTCKLYSLRM…TSDDEALLLC (345 aa). Disordered stretches follow at residues 619-721 and 746-767; these read ALVS…VSPA and SSSTTQNRSPLRQLDTAVSGRE. A compositionally biased stretch (low complexity) spans 712–721; sequence SVEAPSVSPA. A compositionally biased stretch (polar residues) spans 746–755; the sequence is SSSTTQNRSP.

The protein belongs to the LDLR family. In terms of assembly, may interact with RACK1, ZFYVE9 and NMRK2.

The protein resides in the membrane. Its subcellular location is the coated pit. In terms of biological role, probable receptor, which may be involved in the internalization of lipophilic molecules and/or signal transduction. May act as a tumor suppressor. The chain is Low-density lipoprotein receptor-related protein 12 (Lrp12) from Mus musculus (Mouse).